A 91-amino-acid chain; its full sequence is ATP synthase subunit c (91 aa).

2 helical membrane-spanning segments follow: residues 4–24 (LTMCMLAAGFGMAIGAFGTGI) and 53–73 (IGLAMIESLAIYVLVVCLIIL).

Belongs to the ATPase C chain family. F-type ATPases have 2 components, F(1) - the catalytic core - and F(0) - the membrane proton channel. F(1) has five subunits: alpha(3), beta(3), gamma(1), delta(1), epsilon(1). F(0) has three main subunits: a(1), b(2) and c(10-14). The alpha and beta chains form an alternating ring which encloses part of the gamma chain. F(1) is attached to F(0) by a central stalk formed by the gamma and epsilon chains, while a peripheral stalk is formed by the delta and b chains.

It is found in the cell inner membrane. In terms of biological role, f(1)F(0) ATP synthase produces ATP from ADP in the presence of a proton or sodium gradient. F-type ATPases consist of two structural domains, F(1) containing the extramembraneous catalytic core and F(0) containing the membrane proton channel, linked together by a central stalk and a peripheral stalk. During catalysis, ATP synthesis in the catalytic domain of F(1) is coupled via a rotary mechanism of the central stalk subunits to proton translocation. Key component of the F(0) channel; it plays a direct role in translocation across the membrane. A homomeric c-ring of between 10-14 subunits forms the central stalk rotor element with the F(1) delta and epsilon subunits. The chain is ATP synthase subunit c from Geobacter metallireducens (strain ATCC 53774 / DSM 7210 / GS-15).